The sequence spans 490 residues: Sushi domain-containing protein 4 (490 aa).

A disordered region spans residues 1-21 (MYHGMNPSNGDGFLEQQQQQQ). The first 41 residues, 1–41 (MYHGMNPSNGDGFLEQQQQQQQPQSPQRLLAVILWFQLALC), serve as a signal peptide directing secretion. Residues 42–319 (FGPAQLTGGF…PSTHETLLTT (278 aa)) lie on the Extracellular side of the membrane. 4 consecutive Sushi domains span residues 55-119 (QVCA…ICVQ), 120-179 (EDCR…ICQG), 178-239 (QGCL…RCLA), and 241-304 (EVCP…YCIK). 8 disulfide bridges follow: C57–C99, C85–C117, C122–C165, C147–C177, C180–C224, C210–C237, C243–C289, and C274–C302. Residues N104 and N134 are each glycosylated (N-linked (GlcNAc...) asparagine). N192 carries N-linked (GlcNAc...) asparagine glycosylation. Residues 320 to 340 (WKIVAFTATSVLLVLLLVILA) traverse the membrane as a helical segment. The Cytoplasmic portion of the chain corresponds to 341–490 (RMFQTKFKAH…DEIPLMEEDP (150 aa)). The tract at residues 401-490 (GCPLPVDDQS…DEIPLMEEDP (90 aa)) is disordered. A compositionally biased stretch (polar residues) spans 430–456 (CDSVSGSSELLQSLYSPPRCQESTHPA). A compositionally biased stretch (acidic residues) spans 479–490 (IADEIPLMEEDP).

In terms of tissue distribution, isoform 3 is the predominant isoform in all tissues except cortex, cerebellum, kidney, and breast. Isoform 1 is found primarily in the esophagus and the brain.

It is found in the membrane. Its subcellular location is the secreted. Its function is as follows. Acts as a complement inhibitor by disrupting the formation of the classical C3 convertase. Isoform 3 inhibits the classical complement pathway, while membrane-bound isoform 1 inhibits deposition of C3b via both the classical and alternative complement pathways. This Homo sapiens (Human) protein is Sushi domain-containing protein 4 (SUSD4).